The primary structure comprises 186 residues: ADP-ribosylation factor-like protein 8A (186 aa).

An intramembrane region (note=Mediates targeting to membranes) is located at residues 1 to 19 (MLALFNKLLDWFKALFWKE). Residues 29 to 35 (QYSGKTT), 71 to 75 (DIGGQ), and 130 to 133 (NKRD) each bind GTP.

Belongs to the small GTPase superfamily. Arf family.

The protein localises to the late endosome membrane. Its subcellular location is the lysosome membrane. Functionally, may play a role in lysosomes motility. Alternatively, may play a role in chromosome segregation. The protein is ADP-ribosylation factor-like protein 8A (arl8a) of Xenopus tropicalis (Western clawed frog).